The chain runs to 539 residues: MRVNNLTPQDLKAYGINDVQDIVYNPSYDTLYQEELNPGLEGYERGVLTNLGAVAVDTGIFTGRSPKDKYIVRDDTTRDTLWWSDKGKGKNDNKPLSQETWQHLKGLVTHQLSGKRLFIVDAFCGANADTRLSVRFITEVAWQAHFVKNMFIRPTDEELVGFKPDFIVMNGAKCTNPQWKEQGLNSENFVALNLTERIQLIGGTWYGGEMKKGMFSVMNYLLPLKGIASMHCSANVGEKGDVAVFFGLSGTGKTTLSTDPKRRLIGDDEHGWDDDGVFNFEGGCYAKTIKLSKEAEPEIYHAIRRDALLENVTVREDGTVDFDDGSKTENTRVSYPIYHIDNIVKPVSKAGHATKVIFLTADAFGVLPPVSRLTANQTQYHFLSGFTAKLAGTERGVTEPTPTFSACFGAAFLTLHPTQYAEVLVKRMQAAGAQAYLVNTGWNGTGKRISIKDTRAIIDAILNGSLDNAETFRLPLFDLAIPTELPGVDTHILDPRNTYASPEQWQEKATALAKLFIENFEKYTDTPAGEALVSAGPKL.

Substrate contacts are provided by arginine 64, tyrosine 206, and lysine 212. ATP-binding positions include lysine 212, histidine 231, and glycine 247–threonine 255. Residues lysine 212 and histidine 231 each contribute to the Mn(2+) site. Aspartate 268 contacts Mn(2+). Residues glutamate 296, arginine 332, arginine 448 to isoleucine 449, and threonine 454 each bind ATP. Arginine 332 contributes to the substrate binding site.

The protein belongs to the phosphoenolpyruvate carboxykinase (ATP) family. As to quaternary structure, monomer. Mn(2+) is required as a cofactor.

The protein localises to the cytoplasm. It carries out the reaction oxaloacetate + ATP = phosphoenolpyruvate + ADP + CO2. Its pathway is carbohydrate biosynthesis; gluconeogenesis. Its function is as follows. Involved in the gluconeogenesis. Catalyzes the conversion of oxaloacetate (OAA) to phosphoenolpyruvate (PEP) through direct phosphoryl transfer between the nucleoside triphosphate and OAA. The chain is Phosphoenolpyruvate carboxykinase (ATP) from Salmonella gallinarum (strain 287/91 / NCTC 13346).